A 1075-amino-acid polypeptide reads, in one-letter code: Carbamoyl phosphate synthase large chain (1075 aa).

Residues 1–403 (MPKRTDINTI…SLQKALRGLE (403 aa)) are carboxyphosphate synthetic domain. Residues Arg-129, Arg-169, Gly-175, Gly-176, Gln-208, Val-210, Glu-215, Gly-241, Val-242, His-243, Gln-285, and Glu-299 each coordinate ATP. The ATP-grasp 1 domain occupies 133–328 (KDAMTKIGLN…IAKVAAKLAV (196 aa)). 3 residues coordinate Mg(2+): Gln-285, Glu-299, and Asn-301. 3 residues coordinate Mn(2+): Gln-285, Glu-299, and Asn-301. The tract at residues 404–548 (IGICGFNLRS…YSTYEDECEA (145 aa)) is oligomerization domain. The tract at residues 549-930 (KPTTRQKVMI…AYYKAQLGAG (382 aa)) is carbamoyl phosphate synthetic domain. An ATP-grasp 2 domain is found at 673–864 (QKILTDLGLK…LAKIAALVMA (192 aa)). 10 residues coordinate ATP: Arg-709, His-748, Leu-750, Glu-755, Gly-780, Ile-781, His-782, Ser-783, Gln-823, and Glu-835. Mg(2+)-binding residues include Gln-823, Glu-835, and Asn-837. Residues Gln-823, Glu-835, and Asn-837 each contribute to the Mn(2+) site. The MGS-like domain occupies 931–1070 (ERIPSTGKVF…QQLHLSSALA (140 aa)). Residues 931–1075 (ERIPSTGKVF…SSALANQITR (145 aa)) are allosteric domain.

It belongs to the CarB family. Composed of two chains; the small (or glutamine) chain promotes the hydrolysis of glutamine to ammonia, which is used by the large (or ammonia) chain to synthesize carbamoyl phosphate. Tetramer of heterodimers (alpha,beta)4. Mg(2+) serves as cofactor. The cofactor is Mn(2+).

It catalyses the reaction hydrogencarbonate + L-glutamine + 2 ATP + H2O = carbamoyl phosphate + L-glutamate + 2 ADP + phosphate + 2 H(+). The catalysed reaction is hydrogencarbonate + NH4(+) + 2 ATP = carbamoyl phosphate + 2 ADP + phosphate + 2 H(+). Its pathway is amino-acid biosynthesis; L-arginine biosynthesis; carbamoyl phosphate from bicarbonate: step 1/1. It functions in the pathway pyrimidine metabolism; UMP biosynthesis via de novo pathway; (S)-dihydroorotate from bicarbonate: step 1/3. In terms of biological role, large subunit of the glutamine-dependent carbamoyl phosphate synthetase (CPSase). CPSase catalyzes the formation of carbamoyl phosphate from the ammonia moiety of glutamine, carbonate, and phosphate donated by ATP, constituting the first step of 2 biosynthetic pathways, one leading to arginine and/or urea and the other to pyrimidine nucleotides. The large subunit (synthetase) binds the substrates ammonia (free or transferred from glutamine from the small subunit), hydrogencarbonate and ATP and carries out an ATP-coupled ligase reaction, activating hydrogencarbonate by forming carboxy phosphate which reacts with ammonia to form carbamoyl phosphate. In Haemophilus ducreyi (strain 35000HP / ATCC 700724), this protein is Carbamoyl phosphate synthase large chain.